We begin with the raw amino-acid sequence, 244 residues long: Probable H/ACA ribonucleoprotein complex subunit 1-like protein (244 aa).

2 disordered regions span residues 1-53 (MSFR…GGYD) and 145-244 (FLPQ…TKFE). RGG-box stretches follow at residues 4-51 (RGGR…GRGG) and 153-222 (RGRG…RGRG). Basic and acidic residues predominate over residues 160 to 173 (RGGDRGGRGSDRGG). 2 stretches are compositionally biased toward gly residues: residues 174 to 201 (RGGF…GGFR) and 208 to 217 (FRGGRGGDFG). Positions 218–228 (GRGRGDFKRSY) are enriched in basic and acidic residues.

Belongs to the GAR1 family. Component of the small nucleolar ribonucleoprotein particle containing H/ACA-type snoRNAs (H/ACA snoRNPs).

Its subcellular location is the nucleus. The protein resides in the nucleolus. Its function is as follows. Required for ribosome biogenesis. Part of a complex which catalyzes pseudouridylation of rRNA. This involves the isomerization of uridine such that the ribose is subsequently attached to C5, instead of the normal N1. Pseudouridine ('psi') residues may serve to stabilize the conformation of rRNAs. Involved in phase separation into sub-nucleolar condensates. Essential for normal development and also plays a role in fertility. The chain is Probable H/ACA ribonucleoprotein complex subunit 1-like protein from Caenorhabditis elegans.